The primary structure comprises 484 residues: MPSILDLPIGTGATGKRKESDSLGEVEVPADHYWGAQTQRSLIHFSIGDDYMPKEVYHAYGYVKKAAALVNEAAGIIPPWKAELIARVADEVIAGKLDSEFPLYVWQTGSGTQSNMNVNEVISNRAIQLVGGSLGSKHPVHPNDDVNMSQSSNDTFPTAMHIATVLEFSNRLIPAVTVLEESIWAKAREWVDIVKIGRTHLQDATPLTVGQEWSGYATQLDDALAFVKHSLRGLYRLAIGGTAVGTGINTPPDFGEKVADEIARLTGHPFVTAPNKFAAQGSLDAMVTSSAALRTLAVALMKIANDLQWLGSGPRSGLHELILPSDEPGSSIMPGKVNPTQEEAMLMVCIQVIGEDNAVAFAGSQGNFELNAMCPIIINNVLHSARTLGDACVKFREYGINGIMLDRSRIDKFVGTSLMLVTALSPVIGYDKASAIVQRALDENTTLREAAVKGGFISAEDFDRIVDPKKMVGDPRHDLKLASE.

Positions 1–22 are disordered; the sequence is MPSILDLPIGTGATGKRKESDS. Residues 110–112, 141–144, 151–153, and T199 each bind substrate; these read SGT, HPND, and SSN. H200 serves as the catalytic Proton donor/acceptor. Residue S330 is part of the active site. Substrate contacts are provided by residues S331 and 336 to 338; that span reads KVN.

This sequence belongs to the class-II fumarase/aspartase family. Fumarase subfamily. As to quaternary structure, homotetramer.

Its subcellular location is the cytoplasm. It catalyses the reaction (S)-malate = fumarate + H2O. Its pathway is carbohydrate metabolism; tricarboxylic acid cycle; (S)-malate from fumarate: step 1/1. In terms of biological role, involved in the TCA cycle. Catalyzes the stereospecific interconversion of fumarate to L-malate. This chain is Fumarate hydratase class II, found in Methanosarcina acetivorans (strain ATCC 35395 / DSM 2834 / JCM 12185 / C2A).